We begin with the raw amino-acid sequence, 181 residues long: Crustacyanin-A1 subunit (181 aa).

3 disulfides stabilise this stretch: cysteine 12/cysteine 121, cysteine 51/cysteine 173, and cysteine 117/cysteine 150.

This sequence belongs to the calycin superfamily. Lipocalin family. In terms of assembly, oligomer; Can form dimers (beta-crustacyanin); or complexes of 16 subunits (alpha-crustacyanin). There are five types of subunits: A1, A2, A3, C1 and C2. As to expression, found in the carapace.

Its subcellular location is the secreted. The protein resides in the extracellular space. Functionally, binds the carotenoid astaxanthin (AXT) which provides the blue coloration to the carapace of the lobster. This Homarus gammarus (European lobster) protein is Crustacyanin-A1 subunit.